The following is a 355-amino-acid chain: MHC class I-like protein MILL2 (355 aa).

The N-terminal stretch at 1–29 (MKASSGKPREFRPAVLLLILGLLLRDSRG) is a signal peptide. The alpha-1 stretch occupies residues 46–137 (RLTRTHTLRY…VINQKSQEEG (92 aa)). 3 disulfides stabilise this stretch: Cys96-Cys107, Cys147-Cys210, and Cys249-Cys306. Asn104 and Asn152 each carry an N-linked (GlcNAc...) asparagine glycan. An alpha-2 region spans residues 138–229 (LHTLQATLGC…SLRNGLQDTG (92 aa)). The alpha-3 stretch occupies residues 230-323 (PPMVTVTCRN…SIMQTAVSGH (94 aa)). In terms of domain architecture, Ig-like C1-type spans 231–321 (PMVTVTCRNY…NHSIMQTAVS (91 aa)). Residue Asn312 is glycosylated (N-linked (GlcNAc...) asparagine). The interval 324–329 (AAEDSQ) is connecting peptide. The GPI-anchor amidated aspartate moiety is linked to residue Asp330. A propeptide spans 331–355 (VASSATASAGSALPVVLAVALARAN) (removed in mature form).

It belongs to the MHC class I family. In terms of assembly, heterodimer with B2M (beta-2-microglobulin). N-glycosylated. Ubiquitously expressed in neonatal and adult tissues.

Its subcellular location is the cell membrane. Functionally, binds to heparan sulfate proteoglycans on the surface of fibroblast (NIH-3T3) cells. This is MHC class I-like protein MILL2 from Mus musculus (Mouse).